The chain runs to 497 residues: Histone-lysine N-methyltransferase ASHR3 (497 aa).

The PHD-type zinc finger occupies M118–A186. In terms of domain architecture, AWS spans D283–K326. The region spanning K326 to R443 is the SET domain. A Post-SET domain is found at P449 to G465.

This sequence belongs to the class V-like SAM-binding methyltransferase superfamily. Histone-lysine methyltransferase family. SET2 subfamily. Interacts with AMS/bHLH21 by its SET domain and PHD finger. In terms of tissue distribution, expressed in roots, flowers and buds, the anther and in stamen filaments.

It is found in the nucleus. The protein resides in the chromosome. It carries out the reaction L-lysyl-[histone] + S-adenosyl-L-methionine = N(6)-methyl-L-lysyl-[histone] + S-adenosyl-L-homocysteine + H(+). Functionally, histone methyltransferase. Involved in stamen development. This is Histone-lysine N-methyltransferase ASHR3 (ASHR3) from Arabidopsis thaliana (Mouse-ear cress).